A 325-amino-acid chain; its full sequence is MEMLKVHGSGNDFFILDEDNLEEPLTEEELIQLAQKVCDRDTGLHGGADGVLYVQAGHEGTDGRMRVINADGSEASMCGNGIRTVARYLSEKKNLAEFKIQTMHADLEVKKADKLAEKVPAFDAEISPVSFDAQDLLMHVGKEKLIDDYIPELSKAIKFSAVAVPNPHLIAFVDHETLMGEELGRIASYLNNGNNPIFPDGVNVSFVEILEPGKIFVRTFERGVGFTNACGTAMSASSLMYVLLHSDQIDFEKLITVINPGGMVRTMVHKRENGDYWMSLIGNATEVAKVNISQADAINGNFDNFTWNETGEQAAYEAFIAQLHR.

Asn11 and Asn69 together coordinate substrate. Catalysis depends on Cys78, which acts as the Proton donor. Substrate-binding positions include 79–80, Asn166, Asn203, and 221–222; these read GN and ER. Cys230 (proton acceptor) is an active-site residue. 231–232 lines the substrate pocket; it reads GT.

It belongs to the diaminopimelate epimerase family. As to quaternary structure, homodimer.

It is found in the cytoplasm. The catalysed reaction is (2S,6S)-2,6-diaminopimelate = meso-2,6-diaminopimelate. It functions in the pathway amino-acid biosynthesis; L-lysine biosynthesis via DAP pathway; DL-2,6-diaminopimelate from LL-2,6-diaminopimelate: step 1/1. Its function is as follows. Catalyzes the stereoinversion of LL-2,6-diaminopimelate (L,L-DAP) to meso-diaminopimelate (meso-DAP), a precursor of L-lysine and an essential component of the bacterial peptidoglycan. The polypeptide is Diaminopimelate epimerase (Ligilactobacillus salivarius (strain UCC118) (Lactobacillus salivarius)).